The chain runs to 292 residues: Ribonuclease T2-like (292 aa).

Positions 1-23 (MAKTASAMLFLYLLLSRCLLSHA) are cleaved as a signal peptide. 5 cysteine pairs are disulfide-bonded: C42/C61, C50/C103, C60/C177, C111/C169, and C246/C280. N-linked (GlcNAc...) asparagine glycosylation is present at N52. Active-site residues include H96, E162, and H166.

The protein belongs to the RNase T2 family.

The protein localises to the vacuole lumen. Its subcellular location is the cytoplasm. It carries out the reaction a ribonucleotidyl-ribonucleotide-RNA + H2O = a 3'-end 3'-phospho-ribonucleotide-RNA + a 5'-end dephospho-ribonucleoside-RNA + H(+). In terms of biological role, rnase which modulates cell survival under stress conditions. Released from the vacuole to the cytoplasm during stress to promote tRNA and rRNA cleavage and to activate separately a downstream pathway that promotes cell death. Involved in cell size, vacuolar morphology and growth at high temperatures and high salt concentration. In Eremothecium gossypii (strain ATCC 10895 / CBS 109.51 / FGSC 9923 / NRRL Y-1056) (Yeast), this protein is Ribonuclease T2-like (RNY1).